Reading from the N-terminus, the 259-residue chain is DnaJ homolog subfamily C member 9 (259 aa).

Residues 15–82 form the J domain; the sequence is DLYQVLGVRR…EQKAVYDEQG (68 aa). Position 109 is a phosphoserine (Ser-109). The required for histone binding stretch occupies residues 171–248; that stretch reads EIPAYSAFVK…EAKYCKPSKG (78 aa).

As to quaternary structure, forms a co-chaperone complex with MCM2 and histone H3.3-H4 dimers. Within the complex, interacts (via C-terminus) with MCM2 (via N-terminus); the interaction is histone-dependent. Within the complex, interacts (via C-terminus) with histone H3.3-H4 heterodimers; the interaction is direct. Interacts with histones H4, H3.3, H3.2 and H3.1, but not with CENPA or the testis-specific histone H3.1t. Interacts (via J domain) with HSPA1A, HSPA1B and HSPA8. May interact with TONSL; the interaction seems to be histone-dependent. May interact with HSPA8 and BAG2; the interactions seem to be histone-dependent.

It localises to the nucleus. It is found in the cytoplasm. Its subcellular location is the cell membrane. Acts as a dual histone chaperone and heat shock co-chaperone. As a histone chaperone, forms a co-chaperone complex with MCM2 and histone H3-H4 heterodimers; and may thereby assist MCM2 in histone H3-H4 heterodimer recognition and facilitate the assembly of histones into nucleosomes. May also act as a histone co-chaperone together with TONSL. May recruit histone chaperones ASF1A, NASP and SPT2 to histone H3-H4 heterodimers. Also plays a role as co-chaperone of the HSP70 family of molecular chaperone proteins, such as HSPA1A, HSPA1B and HSPA8. As a co-chaperone, may play a role in the recruitment of HSP70-type molecular chaperone machinery to histone H3-H4 substrates, thereby maintaining the histone structural integrity. Exhibits activity to assemble histones onto DNA in vitro. This chain is DnaJ homolog subfamily C member 9 (Dnajc9), found in Mus musculus (Mouse).